A 151-amino-acid polypeptide reads, in one-letter code: Spore coat polysaccharide biosynthesis protein SpsL (151 aa).

To dTDP-4-dehydrorhamnose reductase.

Its pathway is spore coat biogenesis; spore coat polysaccharide biosynthesis. This Bacillus subtilis (strain 168) protein is Spore coat polysaccharide biosynthesis protein SpsL (spsL).